The primary structure comprises 708 residues: Putative adhesion G protein-coupled receptor F2P (708 aa).

Topologically, residues 1–451 are extracellular; the sequence is MGLTAYGNRR…ESLILTYITY (451 aa). Residues Asn-21, Asn-220, Asn-252, Asn-260, Asn-305, Asn-313, and Asn-358 are each glycosylated (N-linked (GlcNAc...) asparagine). One can recognise a GAIN-B domain in the interval 293 to 442; it reads MGTTISGDNI…SILMSPHILE (150 aa). Intrachain disulfides connect Cys-394–Cys-421 and Cys-409–Cys-423. Residues 394-442 are GPS; the sequence is CVGWHSVENRWDQQACKMIQENSQQAVCKCRPSKLFTSFSILMSPHILE. Residues 452–472 traverse the membrane as a helical segment; sequence VGLGISICSLILCLSIEVLVW. Topologically, residues 473–487 are cytoplasmic; that stretch reads SQVTKTEITYLRHVC. The helical transmembrane segment at 488–508 threads the bilayer; it reads IVNIAATLLMADVWFIVASFL. Over 509–530 the chain is Extracellular; it reads SGPITHHKGCVAATFFVHFFYL. A helical membrane pass occupies residues 531–551; sequence SVFFWMLAKALLILYGIMIVF. Over 552-557 the chain is Cytoplasmic; sequence HTLPKS. Residues 558–578 traverse the membrane as a helical segment; that stretch reads VLVASLFSVGYGCPLAIAAIT. Topologically, residues 579 to 606 are extracellular; the sequence is VAATEPGKGYLRPEICWLNWDMTKALLA. A helical transmembrane segment spans residues 607-627; the sequence is FVIPALAIVVVNLITVTLVIV. Over 628–650 the chain is Cytoplasmic; the sequence is KTQRAAIGNSMFQEVRAIVRISK. Residues 651–671 form a helical membrane-spanning segment; the sequence is NIAILTPLLGLTWGFGVATVI. The Extracellular portion of the chain corresponds to 672-674; it reads DDR. The chain crosses the membrane as a helical span at residues 675-695; it reads SLAFHIIFSLLNAFQVSPDAS. The Cytoplasmic segment spans residues 696 to 708; that stretch reads DQVQSERIHEDVL.

Belongs to the G-protein coupled receptor 2 family. Adhesion G-protein coupled receptor (ADGR) subfamily. As to expression, high expression in kidney. Up-regulated in lung adenocarcinomas and prostate cancers.

Its subcellular location is the membrane. Functionally, orphan receptor. This chain is Putative adhesion G protein-coupled receptor F2P, found in Homo sapiens (Human).